The chain runs to 89 residues: MALSAAEKSAIVKEYQTAETDTGSPEVQVALLTANINKLQGHFSDHKQDHHSRRGLIRMVNQRRKLLDYLKGKNVERYASLIQRLGLRR.

This sequence belongs to the universal ribosomal protein uS15 family. Part of the 30S ribosomal subunit. Forms a bridge to the 50S subunit in the 70S ribosome, contacting the 23S rRNA.

Its function is as follows. One of the primary rRNA binding proteins, it binds directly to 16S rRNA where it helps nucleate assembly of the platform of the 30S subunit by binding and bridging several RNA helices of the 16S rRNA. Functionally, forms an intersubunit bridge (bridge B4) with the 23S rRNA of the 50S subunit in the ribosome. In Saccharophagus degradans (strain 2-40 / ATCC 43961 / DSM 17024), this protein is Small ribosomal subunit protein uS15.